A 385-amino-acid chain; its full sequence is Cyclin-A3-2 (385 aa).

The disordered stretch occupies residues 1-110 (MADKENSTPA…STSTASPSSG (110 aa)). 3 stretches are compositionally biased toward low complexity: residues 7–41 (STPA…GAPP), 74–88 (PSSK…AAAP), and 96–110 (PVSS…PSSG).

This sequence belongs to the cyclin family. Cyclin AB subfamily.

In Oryza sativa subsp. japonica (Rice), this protein is Cyclin-A3-2 (CYCA3-2).